The sequence spans 262 residues: Regulatory protein RecX (262 aa).

The protein belongs to the RecX family.

The protein localises to the cytoplasm. Functionally, modulates RecA activity. The chain is Regulatory protein RecX from Photobacterium profundum (strain SS9).